Here is a 458-residue protein sequence, read N- to C-terminus: Bifunctional thioredoxin reductase/thioredoxin (458 aa).

Positions 1 to 321 (MNTTPSAHET…LAEHAGSKAN (321 aa)) are thioredoxin reductase. FAD is bound by residues 19–22 (SGPA), 41–48 (EGTSFGGA), N57, and V90. A disulfide bond links C142 and C145. Residues S163, H182, R188, I245, and Y265 each contribute to the NADP(+) site. FAD-binding positions include D285 and 292 to 295 (RQAI). R292 serves as a coordination point for NADP(+). The linker stretch occupies residues 322–347 (ETTEETGDVDSTDTTDWSTAMTDAKN). The 115-residue stretch at 341 to 455 (AMTDAKNAGV…LLRDLSDVVP (115 aa)) folds into the Thioredoxin domain. C379 and C382 are joined by a disulfide.

This sequence in the N-terminal section; belongs to the class-II pyridine nucleotide-disulfide oxidoreductase family. In terms of assembly, homodimer. FAD serves as cofactor.

The protein localises to the cytoplasm. The enzyme catalyses [thioredoxin]-dithiol + NADP(+) = [thioredoxin]-disulfide + NADPH + H(+). The protein is Bifunctional thioredoxin reductase/thioredoxin (trxB/A) of Mycobacterium leprae (strain TN).